The primary structure comprises 163 residues: MEEGKPRRSSAVLWMLIPCGSIIIVLSVFVIILSTRPPVPPDIKILYCKEGWVGYNKNCYFFSEEKNNKSLAVERCKDMDGHLTSISSKEEFKFILRYKGPGNHWIGIEKVDFNGTWKLEDGSSYDNIVPIKGIGDCAYLSDRSIMSSFCFLPKKWICRIILL.

One can recognise a C-type lectin domain in the interval C48–R159. 2 cysteine pairs are disulfide-bonded: C76–C158 and C137–C150.

The protein is Putative C-type lectin protein FPV239 of Fowlpox virus (strain NVSL) (FPV).